The following is a 109-amino-acid chain: Large ribosomal subunit protein uL24 (109 aa).

Belongs to the universal ribosomal protein uL24 family. In terms of assembly, part of the 50S ribosomal subunit.

One of two assembly initiator proteins, it binds directly to the 5'-end of the 23S rRNA, where it nucleates assembly of the 50S subunit. Functionally, one of the proteins that surrounds the polypeptide exit tunnel on the outside of the subunit. This Rickettsia africae (strain ESF-5) protein is Large ribosomal subunit protein uL24.